The following is a 4010-amino-acid chain: Extracellular matrix organizing protein FRAS1 (4010 aa).

The first 25 residues, 1–25 (MGVLKAWLGVALALAEFAVLPNCEG), serve as a signal peptide directing secretion. VWFC domains follow at residues 26–87 (ACLY…PQCA), 92–152 (GSCH…PICV), 156–216 (KPCS…SQCS), 218–278 (RSCS…EECA), and 282–342 (RSCS…PECI). Residues 26-3903 (ACLYQGSFLA…AASLSQTGAS (3878 aa)) lie on the Extracellular side of the membrane. Ser343 is modified (phosphoserine). A VWFC 6 domain is found at 358–416 (SSSAREIKHVPDGEKWEEGPCKLCECREAQVTCYEPSCPPCPVATLALVVKGQCCPDCT). FU repeat units follow at residues 408–459 (KGQC…GFYQ), 461–504 (GSLC…GFYQ), 506–552 (HHSC…GFYN), 554–598 (QGTC…GYYA), 601–646 (TGSC…GFYP), 648–704 (HGIC…HFYL), 707–752 (TGLC…THFN), 754–799 (EGTC…EQFL), 802–851 (VGYC…GHYK), 853–899 (RGTC…GHYL), 902–947 (NQVC…QYYL), 951–996 (TKTC…QHYR), 998–1041 (SGSC…GYFA), and 1045–1088 (KHRC…GFSG). N-linked (GlcNAc...) asparagine glycosylation is present at Asn727. N-linked (GlcNAc...) asparagine glycans are attached at residues Asn1094 and Asn1107. CSPG repeat units lie at residues 1101 to 1196 (TPSL…LKIS), 1216 to 1307 (APYV…FQAN), 1328 to 1440 (ALRL…FQVS), 1465 to 1561 (APKL…FSFA), 1597 to 1691 (PAFQ…ISVT), 1712 to 1812 (GPRL…FSVS), and 1834 to 1938 (PPHI…FYVS). A glycan (N-linked (GlcNAc...) asparagine) is linked at Asn1506. Residue Asn1779 is glycosylated (N-linked (GlcNAc...) asparagine). 2 N-linked (GlcNAc...) asparagine glycosylation sites follow: Asn1950 and Asn1980. CSPG repeat units follow at residues 1959-2059 (EPPR…FSLT), 2080-2179 (IPHL…FDVV), 2201-2293 (PPVV…FVLS), 2313-2406 (ARPL…FTVS), and 2441-2538 (TPRI…FLVK). 5 consecutive Calx-beta domains span residues 2545–2648 (VSDN…VGLS), 2661–2772 (AKVV…IALA), 2786–2892 (AKVL…VFLS), 2907–3009 (IAIN…VYLG), and 3027–3131 (ATVT…LVLG). N-linked (GlcNAc...) asparagine glycans are attached at residues Asn2565, Asn2666, and Asn2684. Asn2910, Asn2987, Asn3072, Asn3220, Asn3678, and Asn3877 each carry an N-linked (GlcNAc...) asparagine glycan. A helical transmembrane segment spans residues 3904–3924 (IGSALAAIMLLLLLFLVACFV). Over 3925-4010 (TRKCQKQKKK…HNNLQDGTEV (86 aa)) the chain is Cytoplasmic.

This sequence belongs to the FRAS1 family.

It is found in the cell membrane. Involved in extracellular matrix organization. Required for the regulation of epidermal-basement membrane adhesion responsible for proper organogenesis during embryonic development. Involved in brain organization and function. The sequence is that of Extracellular matrix organizing protein FRAS1 from Mus musculus (Mouse).